A 348-amino-acid chain; its full sequence is Lipoyl synthase (348 aa).

Residues cysteine 55, cysteine 60, cysteine 66, cysteine 81, cysteine 85, cysteine 88, and serine 292 each coordinate [4Fe-4S] cluster. Residues 67 to 281 form the Radical SAM core domain; it reads WESREATFLI…ADAAKEMGFA (215 aa).

Belongs to the radical SAM superfamily. Lipoyl synthase family. [4Fe-4S] cluster is required as a cofactor.

The protein resides in the cytoplasm. It catalyses the reaction [[Fe-S] cluster scaffold protein carrying a second [4Fe-4S](2+) cluster] + N(6)-octanoyl-L-lysyl-[protein] + 2 oxidized [2Fe-2S]-[ferredoxin] + 2 S-adenosyl-L-methionine + 4 H(+) = [[Fe-S] cluster scaffold protein] + N(6)-[(R)-dihydrolipoyl]-L-lysyl-[protein] + 4 Fe(3+) + 2 hydrogen sulfide + 2 5'-deoxyadenosine + 2 L-methionine + 2 reduced [2Fe-2S]-[ferredoxin]. Its pathway is protein modification; protein lipoylation via endogenous pathway; protein N(6)-(lipoyl)lysine from octanoyl-[acyl-carrier-protein]: step 2/2. Its function is as follows. Catalyzes the radical-mediated insertion of two sulfur atoms into the C-6 and C-8 positions of the octanoyl moiety bound to the lipoyl domains of lipoate-dependent enzymes, thereby converting the octanoylated domains into lipoylated derivatives. This is Lipoyl synthase from Corynebacterium glutamicum (strain R).